Here is a 570-residue protein sequence, read N- to C-terminus: Proline--tRNA ligase (570 aa).

This sequence belongs to the class-II aminoacyl-tRNA synthetase family. ProS type 1 subfamily. In terms of assembly, homodimer.

The protein localises to the cytoplasm. The enzyme catalyses tRNA(Pro) + L-proline + ATP = L-prolyl-tRNA(Pro) + AMP + diphosphate. In terms of biological role, catalyzes the attachment of proline to tRNA(Pro) in a two-step reaction: proline is first activated by ATP to form Pro-AMP and then transferred to the acceptor end of tRNA(Pro). As ProRS can inadvertently accommodate and process non-cognate amino acids such as alanine and cysteine, to avoid such errors it has two additional distinct editing activities against alanine. One activity is designated as 'pretransfer' editing and involves the tRNA(Pro)-independent hydrolysis of activated Ala-AMP. The other activity is designated 'posttransfer' editing and involves deacylation of mischarged Ala-tRNA(Pro). The misacylated Cys-tRNA(Pro) is not edited by ProRS. This Geotalea daltonii (strain DSM 22248 / JCM 15807 / FRC-32) (Geobacter daltonii) protein is Proline--tRNA ligase.